A 424-amino-acid chain; its full sequence is Formyl-CoA:oxalate CoA-transferase (424 aa).

Residues 17–18, R38, 96–98, R104, and 136–139 each bind CoA; these read QS, NFA, and KVYE. D168 serves as the catalytic Nucleophile. Position 247–249 (247–249) interacts with substrate; it reads GGQ.

It belongs to the CoA-transferase III family. Frc subfamily. In terms of assembly, homodimer.

It catalyses the reaction formyl-CoA + oxalate = oxalyl-CoA + formate. Its pathway is metabolic intermediate degradation; oxalate degradation; CO(2) and formate from oxalate: step 1/2. Involved in the catabolism of oxalate and in the adapatation to low pH via the induction of the oxalate-dependent acid tolerance response (ATR). Catalyzes the transfer of the CoA moiety from formyl-CoA to oxalate. The protein is Formyl-CoA:oxalate CoA-transferase of Afipia carboxidovorans (strain ATCC 49405 / DSM 1227 / KCTC 32145 / OM5) (Oligotropha carboxidovorans).